Consider the following 231-residue polypeptide: Small ribosomal subunit protein uS3 (231 aa).

The region spanning 39 to 107 is the KH type-2 domain; sequence IRKFLKAKLY…DVTINIKEER (69 aa).

The protein belongs to the universal ribosomal protein uS3 family. Part of the 30S ribosomal subunit. Forms a tight complex with proteins S10 and S14.

Functionally, binds the lower part of the 30S subunit head. Binds mRNA in the 70S ribosome, positioning it for translation. This Campylobacter hominis (strain ATCC BAA-381 / DSM 21671 / CCUG 45161 / LMG 19568 / NCTC 13146 / CH001A) protein is Small ribosomal subunit protein uS3.